A 376-amino-acid chain; its full sequence is Neuropeptide receptor 3 (376 aa).

The Extracellular segment spans residues 1–29 (MEGGRNCVMTVQQWQPEYNDMNQIRAIFS). A helical membrane pass occupies residues 30 to 50 (LLYLLVWVGAIVGNTLVLYVL). The Cytoplasmic portion of the chain corresponds to 51–66 (TFNQVSLSVRTVFVGC). A helical transmembrane segment spans residues 67 to 87 (LAGSDLLMCLFSLPITAISIF). The Extracellular segment spans residues 88-89 (SR). A helical transmembrane segment spans residues 90-110 (VWVFPAIFCKLIGVFQGGTIF). A disulfide bond links cysteine 98 and cysteine 175. The Cytoplasmic portion of the chain corresponds to 111–139 (VSSFTLTVIALDRCVLILRPNQEIVNFPR). The helical transmembrane segment at 140–160 (AVFIVFCIWLLGYSLALPVGI) threads the bilayer. Residues 161-197 (YSDIAVYDEICGTFCEENWPDFNPDTGRSGIRRAYGL) are Extracellular-facing. Residues 198–218 (SVLVLQFGIPALISSICYWMI) traverse the membrane as a helical segment. Topologically, residues 219–251 (SRVMSDQLARRRGHNIRPESETKLVNRKTRANR) are cytoplasmic. The chain crosses the membrane as a helical span at residues 252–272 (MMIVMVVGFVLAWMPFNAVNL). Residues 273 to 284 (YRDLFGISKWYS) lie on the Extracellular side of the membrane. The chain crosses the membrane as a helical span at residues 285-305 (TVFALCHVCAMCSAVLNPIIY). Over 306–376 (SWFNPQFRQS…NDYRAGDQLL (71 aa)) the chain is Cytoplasmic.

Belongs to the G-protein coupled receptor 1 family.

It is found in the cell membrane. In terms of biological role, G-protein coupled receptor for flp-15 neuropeptides. Receptor activation assays suggest binding to predicted flp-15 peptides, GGPQGPLRF-NH2 and RGPSGPLRF-NH2. Likely involved in Gi/Go-coupled signaling pathways. This is Neuropeptide receptor 3 from Caenorhabditis elegans.